Here is a 69-residue protein sequence, read N- to C-terminus: Probable cold shock protein y4cH (69 aa).

Positions 5–65 constitute a CSD domain; that stretch reads GTVKWFNATK…DRKSGKMSAD (61 aa).

It is found in the cytoplasm. The sequence is that of Probable cold shock protein y4cH from Sinorhizobium fredii (strain NBRC 101917 / NGR234).